A 226-amino-acid polypeptide reads, in one-letter code: TPD1 protein homolog 1A (226 aa).

Residues 1–35 form the signal peptide; sequence MRVSSASSTPPPPAFAAAAWAVVLLAMLRSDVALA.

Interacts with MSP1. As to expression, expressed in roots, and anthers and ovules during meiosis.

In terms of biological role, involved in cell specification during anther development. Required for the differentiation of primary parietal cells into secondary parietal cells in anthers. May serve as an extracellular ligand for the MSP1 receptor kinase to limit sporocyte number in ovules. The chain is TPD1 protein homolog 1A from Oryza sativa subsp. japonica (Rice).